The following is an 855-amino-acid chain: Dynein axonemal assembly factor 5 (855 aa).

Alanine 2 carries the N-acetylalanine modification. 10 HEAT repeats span residues 71–109, 202–240, 241–278, 280–318, 354–376, 377–414, 599–638, 696–734, 738–776, and 784–822; these read GPWARLLLPRLLRCLSDPAEGCRALAVHLLDLGLRRAAR, HMQSESLIGPLMQTISHQHWKVRVAAIEATGAVIHFGNG, KSVDDVLSHFAQRLFDDVPQVRRAVASVVGGWLLCLRD, YSFFHKLIPLLLSSLNDEVPEVRQLAASLWEDVGLQWQK, FRNLSKILPALCHDITDWVVGTR, VKSAQLLPVLLLHAEDHATQHLEVVLRTLFQACTDEEA, GEALPHVVPTLRACLQPSQDPQMRLKLFSILSTVLLRATD, RDVQETLMPQVLTTLEEDSKMTRLISCRIINTFLKTSGG, PEKLIRIYPELLKRLDDVSNDVRMAAASTLVTWLQCVKG, and QSSVQYLYRELLVHLDDPERAIQDAILEVLKEGSGLFPD.

The protein belongs to the DNAAF5 family. Interacts with DNAI2; probably involved in outer arm dynein assembly. As to expression, expressed in nasal epithelium and lung epithelium by ciliated cells (at protein level).

Its subcellular location is the cytoplasm. It localises to the dynein axonemal particle. Its function is as follows. Cytoplasmic protein involved in the delivery of the dynein machinery to the motile cilium. It is required for the assembly of the axonemal dynein inner and outer arms, two structures attached to the peripheral outer doublet A microtubule of the axoneme, that play a crucial role in cilium motility. The protein is Dynein axonemal assembly factor 5 of Homo sapiens (Human).